A 491-amino-acid polypeptide reads, in one-letter code: Cytochrome P450 2H1 (491 aa).

Residue C436 coordinates heme.

It belongs to the cytochrome P450 family. The cofactor is heme. Expressed in liver.

It is found in the endoplasmic reticulum membrane. The protein resides in the microsome membrane. It catalyses the reaction an organic molecule + reduced [NADPH--hemoprotein reductase] + O2 = an alcohol + oxidized [NADPH--hemoprotein reductase] + H2O + H(+). Functionally, cytochromes P450 are a group of heme-thiolate monooxygenases. In liver microsomes, this enzyme is involved in an NADPH-dependent electron transport pathway. It oxidizes a variety of structurally unrelated compounds, including steroids, fatty acids, and xenobiotics. The chain is Cytochrome P450 2H1 (CYP2H1) from Gallus gallus (Chicken).